Reading from the N-terminus, the 461-residue chain is Bifunctional protein HldE (461 aa).

The interval 1–312 is ribokinase; the sequence is MLEFLSQQKP…IRSFKSMSFE (312 aa). 191–194 is a binding site for ATP; the sequence is NKKE. Aspartate 259 is a catalytic residue. The cytidylyltransferase stretch occupies residues 334–461; the sequence is FTNGCFDIVH…KIIEKIKDKK (128 aa).

It in the N-terminal section; belongs to the carbohydrate kinase PfkB family. In the C-terminal section; belongs to the cytidylyltransferase family. Homodimer.

The enzyme catalyses D-glycero-beta-D-manno-heptose 7-phosphate + ATP = D-glycero-beta-D-manno-heptose 1,7-bisphosphate + ADP + H(+). The catalysed reaction is D-glycero-beta-D-manno-heptose 1-phosphate + ATP + H(+) = ADP-D-glycero-beta-D-manno-heptose + diphosphate. The protein operates within nucleotide-sugar biosynthesis; ADP-L-glycero-beta-D-manno-heptose biosynthesis; ADP-L-glycero-beta-D-manno-heptose from D-glycero-beta-D-manno-heptose 7-phosphate: step 1/4. It participates in nucleotide-sugar biosynthesis; ADP-L-glycero-beta-D-manno-heptose biosynthesis; ADP-L-glycero-beta-D-manno-heptose from D-glycero-beta-D-manno-heptose 7-phosphate: step 3/4. Catalyzes the phosphorylation of D-glycero-D-manno-heptose 7-phosphate at the C-1 position to selectively form D-glycero-beta-D-manno-heptose-1,7-bisphosphate. In terms of biological role, catalyzes the ADP transfer from ATP to D-glycero-beta-D-manno-heptose 1-phosphate, yielding ADP-D-glycero-beta-D-manno-heptose. The sequence is that of Bifunctional protein HldE from Campylobacter jejuni (strain RM1221).